We begin with the raw amino-acid sequence, 305 residues long: Ribonuclease BN (305 aa).

Zn(2+) contacts are provided by H64, H66, D68, H69, H141, D212, and H270. D68 acts as the Proton acceptor in catalysis.

It belongs to the RNase Z family. RNase BN subfamily. In terms of assembly, homodimer. Requires Zn(2+) as cofactor.

Zinc phosphodiesterase, which has both exoribonuclease and endoribonuclease activities. The polypeptide is Ribonuclease BN (Salmonella paratyphi C (strain RKS4594)).